The sequence spans 304 residues: N-acetyl-D-glucosamine kinase (304 aa).

Residues 4–11 (GFDMGGTK) and 133–140 (GVGGGLIV) each bind ATP. 4 residues coordinate Zn(2+): H157, C177, C179, and C184.

The protein belongs to the ROK (NagC/XylR) family. NagK subfamily.

The enzyme catalyses N-acetyl-D-glucosamine + ATP = N-acetyl-D-glucosamine 6-phosphate + ADP + H(+). It functions in the pathway cell wall biogenesis; peptidoglycan recycling. In terms of biological role, catalyzes the phosphorylation of N-acetyl-D-glucosamine (GlcNAc) derived from cell-wall degradation, yielding GlcNAc-6-P. The polypeptide is N-acetyl-D-glucosamine kinase (Yersinia pseudotuberculosis serotype O:1b (strain IP 31758)).